We begin with the raw amino-acid sequence, 419 residues long: Peptide chain release factor subunit 1 (419 aa).

The protein belongs to the eukaryotic release factor 1 family. In terms of assembly, heterodimer of two subunits, one of which binds GTP.

Its subcellular location is the cytoplasm. Directs the termination of nascent peptide synthesis (translation) in response to the termination codons UAA, UAG and UGA. In Methanococcus vannielii (strain ATCC 35089 / DSM 1224 / JCM 13029 / OCM 148 / SB), this protein is Peptide chain release factor subunit 1.